The chain runs to 114 residues: DNA-directed RNA polymerases II, IV and V subunit 9A (114 aa).

Zn(2+) contacts are provided by C7, C10, C29, C32, C76, C79, C103, and C108. Residues 72 to 113 (KAVRCSKCQHREAVFFQATARGEEGMTLFFVCCNPNCGHRWR) form a TFIIS-type zinc finger.

The protein belongs to the archaeal RpoM/eukaryotic RPA12/RPB9/RPC11 RNA polymerase family. Component of the RNA polymerase II, IV and V complexes. Interacts with NRPD1.

The protein resides in the nucleus. It localises to the nucleolus. In terms of biological role, DNA-dependent RNA polymerase catalyzes the transcription of DNA into RNA using the four ribonucleoside triphosphates as substrates. Component of RNA polymerase II which synthesizes mRNA precursors and many functional non-coding RNAs. Pol II is the central component of the basal RNA polymerase II transcription machinery. It is composed of mobile elements that move relative to each other. Component of RNA polymerases IV and V which mediate short-interfering RNAs (siRNA) accumulation and subsequent RNA-directed DNA methylation-dependent (RdDM) transcriptional gene silencing (TGS) of endogenous repeated sequences, including transposable elements. Required for RNA silencing. This is DNA-directed RNA polymerases II, IV and V subunit 9A (NRPB9A) from Arabidopsis thaliana (Mouse-ear cress).